Reading from the N-terminus, the 167-residue chain is 6,7-dimethyl-8-ribityllumazine synthase (167 aa).

Residues F26, 60 to 62 (AFE), and 89 to 91 (AII) each bind 5-amino-6-(D-ribitylamino)uracil. 94–95 (ET) contributes to the (2S)-2-hydroxy-3-oxobutyl phosphate binding site. Residue H97 is the Proton donor of the active site. F122 contributes to the 5-amino-6-(D-ribitylamino)uracil binding site. (2S)-2-hydroxy-3-oxobutyl phosphate is bound at residue R136.

It belongs to the DMRL synthase family. As to quaternary structure, forms an icosahedral capsid composed of 60 subunits, arranged as a dodecamer of pentamers.

The enzyme catalyses (2S)-2-hydroxy-3-oxobutyl phosphate + 5-amino-6-(D-ribitylamino)uracil = 6,7-dimethyl-8-(1-D-ribityl)lumazine + phosphate + 2 H2O + H(+). Its pathway is cofactor biosynthesis; riboflavin biosynthesis; riboflavin from 2-hydroxy-3-oxobutyl phosphate and 5-amino-6-(D-ribitylamino)uracil: step 1/2. Functionally, catalyzes the formation of 6,7-dimethyl-8-ribityllumazine by condensation of 5-amino-6-(D-ribitylamino)uracil with 3,4-dihydroxy-2-butanone 4-phosphate. This is the penultimate step in the biosynthesis of riboflavin. The protein is 6,7-dimethyl-8-ribityllumazine synthase of Ruthia magnifica subsp. Calyptogena magnifica.